Reading from the N-terminus, the 1562-residue chain is DNA-directed RNA polymerase subunit beta'' (1562 aa).

The tract at residues 1-22 is disordered; it reads MVKKKKFKTKNIQNPPFSSQNS. Over residues 11–22 the composition is skewed to polar residues; it reads NIQNPPFSSQNS. Positions 275, 338, 345, and 348 each coordinate Zn(2+).

The protein belongs to the RNA polymerase beta' chain family. RpoC2 subfamily. In plastids the minimal PEP RNA polymerase catalytic core is composed of four subunits: alpha, beta, beta', and beta''. When a (nuclear-encoded) sigma factor is associated with the core the holoenzyme is formed, which can initiate transcription. Requires Zn(2+) as cofactor.

It localises to the plastid. It is found in the chloroplast. It carries out the reaction RNA(n) + a ribonucleoside 5'-triphosphate = RNA(n+1) + diphosphate. In terms of biological role, DNA-dependent RNA polymerase catalyzes the transcription of DNA into RNA using the four ribonucleoside triphosphates as substrates. In Chlorella vulgaris (Green alga), this protein is DNA-directed RNA polymerase subunit beta''.